The sequence spans 148 residues: MYLTEQIMDRPKPRTVKELADTLVIPLIDLLIPCKFCNRFLSYFELLNFDHKCLQLIWTEEDLVYGLCSSCAYASAQLEFTHFFQFAVVGKDIETVEGTAIGNICIRCRYCFKLLDLVEKLATCYKFEQFYKVRNSWKGLCRHCGSVE.

Zinc fingers lie at residues 34–71 (CKFC…CSSC) and 108–144 (CRYC…CRHC).

It belongs to the papillomaviridae E6 protein family. Forms homodimers. Interacts with ubiquitin-protein ligase UBE3A/E6-AP; this interaction stimulates UBE3A ubiquitin activity. Interacts with host BAK1.

The protein resides in the host cytoplasm. It is found in the host nucleus. In terms of biological role, plays a major role in the induction and maintenance of cellular transformation. E6 associates with host UBE3A/E6-AP ubiquitin-protein ligase and modulates its activity. Protects host keratinocytes from apoptosis by mediating the degradation of host BAK1. May also inhibit host immune response. This Human papillomavirus 9 protein is Protein E6.